Reading from the N-terminus, the 181-residue chain is TATA-box-binding protein C (181 aa).

2 repeat units span residues 5 to 83 and 99 to 177.

This sequence belongs to the TBP family.

Its function is as follows. General factor that plays a role in the activation of archaeal genes transcribed by RNA polymerase. Binds specifically to the TATA box promoter element which lies close to the position of transcription initiation. This Halobacterium salinarum (strain ATCC 700922 / JCM 11081 / NRC-1) (Halobacterium halobium) protein is TATA-box-binding protein C (tbpC1).